The primary structure comprises 442 residues: Citrate synthase (442 aa).

Catalysis depends on residues His274, His320, and Asp375.

Belongs to the citrate synthase family.

The catalysed reaction is oxaloacetate + acetyl-CoA + H2O = citrate + CoA + H(+). The protein operates within carbohydrate metabolism; tricarboxylic acid cycle; isocitrate from oxaloacetate: step 1/2. Functionally, catalyzes both citrate generation and citrate cleavage. Part of a reversible tricarboxylic acid (TCA) cycle that can fix carbon dioxide autotrophically and may represent an ancestral mode of the conventional reductive TCA (rTCA) cycle. The direction is controlled by the available carbon source(s). This chain is Citrate synthase, found in Thermosulfidibacter takaii (strain DSM 17441 / JCM 13301 / NBRC 103674 / ABI70S6).